The sequence spans 152 residues: Ribosome maturation factor RimP (152 aa).

Belongs to the RimP family.

The protein resides in the cytoplasm. Required for maturation of 30S ribosomal subunits. The polypeptide is Ribosome maturation factor RimP (Alteromonas mediterranea (strain DSM 17117 / CIP 110805 / LMG 28347 / Deep ecotype)).